The primary structure comprises 170 residues: Crossover junction endodeoxyribonuclease RuvC (170 aa).

Active-site residues include Asp-9, Glu-70, and Asp-145. Positions 9, 70, and 145 each coordinate Mg(2+).

It belongs to the RuvC family. Homodimer which binds Holliday junction (HJ) DNA. The HJ becomes 2-fold symmetrical on binding to RuvC with unstacked arms; it has a different conformation from HJ DNA in complex with RuvA. In the full resolvosome a probable DNA-RuvA(4)-RuvB(12)-RuvC(2) complex forms which resolves the HJ. Requires Mg(2+) as cofactor.

It is found in the cytoplasm. The enzyme catalyses Endonucleolytic cleavage at a junction such as a reciprocal single-stranded crossover between two homologous DNA duplexes (Holliday junction).. Functionally, the RuvA-RuvB-RuvC complex processes Holliday junction (HJ) DNA during genetic recombination and DNA repair. Endonuclease that resolves HJ intermediates. Cleaves cruciform DNA by making single-stranded nicks across the HJ at symmetrical positions within the homologous arms, yielding a 5'-phosphate and a 3'-hydroxyl group; requires a central core of homology in the junction. The consensus cleavage sequence is 5'-(A/T)TT(C/G)-3'. Cleavage occurs on the 3'-side of the TT dinucleotide at the point of strand exchange. HJ branch migration catalyzed by RuvA-RuvB allows RuvC to scan DNA until it finds its consensus sequence, where it cleaves and resolves the cruciform DNA. The protein is Crossover junction endodeoxyribonuclease RuvC of Chlamydia trachomatis serovar A (strain ATCC VR-571B / DSM 19440 / HAR-13).